Consider the following 240-residue polypeptide: UDP-2,3-diacylglucosamine hydrolase (240 aa).

Mn(2+) is bound by residues D8, H10, D41, N79, and H114. 79–80 (NR) lines the substrate pocket. Substrate-binding residues include D122, S160, N164, K167, and H195. Residues H195 and H197 each coordinate Mn(2+).

It belongs to the LpxH family. Mn(2+) serves as cofactor.

The protein resides in the cell inner membrane. The enzyme catalyses UDP-2-N,3-O-bis[(3R)-3-hydroxytetradecanoyl]-alpha-D-glucosamine + H2O = 2-N,3-O-bis[(3R)-3-hydroxytetradecanoyl]-alpha-D-glucosaminyl 1-phosphate + UMP + 2 H(+). The protein operates within glycolipid biosynthesis; lipid IV(A) biosynthesis; lipid IV(A) from (3R)-3-hydroxytetradecanoyl-[acyl-carrier-protein] and UDP-N-acetyl-alpha-D-glucosamine: step 4/6. Functionally, hydrolyzes the pyrophosphate bond of UDP-2,3-diacylglucosamine to yield 2,3-diacylglucosamine 1-phosphate (lipid X) and UMP by catalyzing the attack of water at the alpha-P atom. Involved in the biosynthesis of lipid A, a phosphorylated glycolipid that anchors the lipopolysaccharide to the outer membrane of the cell. The chain is UDP-2,3-diacylglucosamine hydrolase from Salmonella dublin (strain CT_02021853).